The primary structure comprises 117 residues: Large ribosomal subunit protein bL19 (117 aa).

It belongs to the bacterial ribosomal protein bL19 family.

In terms of biological role, this protein is located at the 30S-50S ribosomal subunit interface and may play a role in the structure and function of the aminoacyl-tRNA binding site. This Paenarthrobacter aurescens (strain TC1) protein is Large ribosomal subunit protein bL19.